We begin with the raw amino-acid sequence, 420 residues long: S-adenosylmethionine synthase (420 aa).

His-16 contributes to the ATP binding site. Asp-18 contributes to the Mg(2+) binding site. K(+) is bound at residue Glu-44. Positions 57 and 100 each coordinate L-methionine. Residues 100 to 110 (QSPDIAQGVNT) are flexible loop. ATP contacts are provided by residues 175 to 177 (DGK), 251 to 252 (KF), Asp-260, 266 to 267 (RK), Ala-283, and Lys-287. L-methionine is bound at residue Asp-260. Lys-291 is an L-methionine binding site.

The protein belongs to the AdoMet synthase family. Homotetramer; dimer of dimers. Mg(2+) is required as a cofactor. Requires K(+) as cofactor.

The protein resides in the cytoplasm. It carries out the reaction L-methionine + ATP + H2O = S-adenosyl-L-methionine + phosphate + diphosphate. The protein operates within amino-acid biosynthesis; S-adenosyl-L-methionine biosynthesis; S-adenosyl-L-methionine from L-methionine: step 1/1. Catalyzes the formation of S-adenosylmethionine (AdoMet) from methionine and ATP. The overall synthetic reaction is composed of two sequential steps, AdoMet formation and the subsequent tripolyphosphate hydrolysis which occurs prior to release of AdoMet from the enzyme. This Trichormus variabilis (strain ATCC 29413 / PCC 7937) (Anabaena variabilis) protein is S-adenosylmethionine synthase.